The primary structure comprises 367 residues: Phosphoribosylaminoimidazole-succinocarboxamide synthase (367 aa).

It belongs to the SAICAR synthetase family.

The enzyme catalyses 5-amino-1-(5-phospho-D-ribosyl)imidazole-4-carboxylate + L-aspartate + ATP = (2S)-2-[5-amino-1-(5-phospho-beta-D-ribosyl)imidazole-4-carboxamido]succinate + ADP + phosphate + 2 H(+). The protein operates within purine metabolism; IMP biosynthesis via de novo pathway; 5-amino-1-(5-phospho-D-ribosyl)imidazole-4-carboxamide from 5-amino-1-(5-phospho-D-ribosyl)imidazole-4-carboxylate: step 1/2. This is Phosphoribosylaminoimidazole-succinocarboxamide synthase from Shewanella baltica (strain OS223).